The primary structure comprises 308 residues: tRNA pseudouridine synthase B (308 aa).

Aspartate 51 functions as the Nucleophile in the catalytic mechanism.

It belongs to the pseudouridine synthase TruB family. Type 1 subfamily.

It carries out the reaction uridine(55) in tRNA = pseudouridine(55) in tRNA. Functionally, responsible for synthesis of pseudouridine from uracil-55 in the psi GC loop of transfer RNAs. This chain is tRNA pseudouridine synthase B, found in Aromatoleum aromaticum (strain DSM 19018 / LMG 30748 / EbN1) (Azoarcus sp. (strain EbN1)).